The sequence spans 244 residues: Eukaryotic translation initiation factor 4E type 1B (244 aa).

The span at 1-26 (MNKVEGGGHKEEVVVKEKEVVKEKPS) shows a compositional bias: basic and acidic residues. The interval 1 to 57 (MNKVEGGGHKEEVVVKEKEVVKEKPSEATAEGVQAGEAKDLPGSLKTQRRKAHREHP) is disordered. Residues 65–68 (HPLQ) are EIF4EBP1/2/3 binding. 84–85 (WQ) lines the mRNA pocket. An EIF4EBP1/2/3 binding region spans residues 101–105 (WAVYS). An mRNA-binding site is contributed by 130-131 (WE). The tract at residues 160–167 (ETLLCLVG) is EIF4EBP1/2/3 binding. MRNA-binding positions include 185–190 (RTKRDK) and 233–235 (AKS).

This sequence belongs to the eukaryotic initiation factor 4E family. As to quaternary structure, EIF4F is a multi-subunit complex, the composition of which varies with external and internal environmental conditions. It is composed of at least EIF4A, EIF4E and EIF4G.

Recognizes and binds the 7-methylguanosine-containing mRNA cap during an early step in the initiation of protein synthesis and facilitates ribosome binding by inducing the unwinding of the mRNAs secondary structures. The sequence is that of Eukaryotic translation initiation factor 4E type 1B (Eif4e1b) from Mus musculus (Mouse).